The sequence spans 30 residues: Photosystem I reaction center subunit XII (30 aa).

Residues 7 to 29 (IYTVLCIALLAGILAIRLGSTLY) form a helical membrane-spanning segment.

The protein belongs to the PsaM family.

It is found in the plastid. Its subcellular location is the chloroplast thylakoid membrane. This is Photosystem I reaction center subunit XII from Phaeodactylum tricornutum (strain CCAP 1055/1).